A 162-amino-acid polypeptide reads, in one-letter code: Terminase, small subunit (162 aa).

A helix-turn-helix (HTH) region spans residues 7–27 (NRFWEARSSHGRNPKFESPEA). The interval 132 to 162 (QVEDVTPDKGDRDKRRSRIKELFNRGTGRDS) is disordered. Residues 137 to 162 (TPDKGDRDKRRSRIKELFNRGTGRDS) are compositionally biased toward basic and acidic residues. Positions 140 to 162 (KGDRDKRRSRIKELFNRGTGRDS) are interaction with the terminase large subunit gp2. A DNA-binding region spans residues 143–152 (RDKRRSRIKE).

Belongs to the P22likvirus small terminase family. Homononamer; forms a ring-like structure through which genomic DNA is translocated into the capsid. Interacts with the terminase small subunit; the active complex is composed of dimer of terminase large subunits and a nonamer ring of terminase small subunits.

Functionally, the terminase small subunit binds to the packaging initiation site and regulates the ATPase activity of the terminase large subunit. The terminase lies at a unique vertex of the procapsid and is composed of two subunits, a small terminase subunit involved in viral DNA recognition (packaging 'pac' sequence), and a large terminase subunit possessing endonucleolytic and ATPase activities. Both terminase subunits heterooligomerize and are docked on the portal protein to form the packaging machine. The terminase large subunit exhibits endonuclease activity and cleaves the viral genome concatemer once the capsid is full (headful packaging). Once the capsid is packaged with the DNA, the terminase complex is substituted by neck proteins. In Salmonella typhimurium (Bacteriophage P22), this protein is Terminase, small subunit (3).